The following is a 408-amino-acid chain: Glutamate N-acetyltransferase (408 aa).

Residues Thr150, Lys176, Thr189, Glu271, Asn403, and Thr408 each contribute to the substrate site. The active-site Nucleophile is Thr189.

It belongs to the ArgJ family. As to quaternary structure, heterotetramer of two alpha and two beta chains.

It is found in the cytoplasm. The catalysed reaction is N(2)-acetyl-L-ornithine + L-glutamate = N-acetyl-L-glutamate + L-ornithine. It functions in the pathway amino-acid biosynthesis; L-arginine biosynthesis; L-ornithine and N-acetyl-L-glutamate from L-glutamate and N(2)-acetyl-L-ornithine (cyclic): step 1/1. Its function is as follows. Catalyzes the transfer of the acetyl group from N(2)-acetylornithine to glutamate, forming N-acetylglutamate and L-ornithine. This chain is Glutamate N-acetyltransferase, found in Methanococcus maripaludis (strain C7 / ATCC BAA-1331).